The following is a 330-amino-acid chain: MISFSSFYQQIADSNLQHWLEELPAILGQWQREHKHGNLPKWEKVLNKLHYPAPDRIDFTTRVEVGSGDQLSKGQQEKLKNLLKLFCPWRKGPFDLHGIHIDTEWRSDWKWERVQPHISPLKNRTVLDVGCGSGYHMWRMLGDGAKRVVGIDPSPLFLCQFEAVKRLAGNDHPVHLLPLGIEQLPPLDAFDTVFSMGVLYHRRSPIDHLLQLRDQLRTGGELVLETLVVDGDENTVLVPGERYGKMNNVWFLPSAKALEAWLKKADFVDVRCVDIDVTSLAEQRSTEWMPNESLVDYLDPNDVSLTVEGYPAPKRATFIAVKNQPNKDLV.

Carboxy-S-adenosyl-L-methionine-binding positions include K91, W105, K110, G130, 152 to 154 (DPS), 181 to 182 (IE), M196, Y200, and R315.

It belongs to the class I-like SAM-binding methyltransferase superfamily. CmoB family. In terms of assembly, homotetramer.

It carries out the reaction carboxy-S-adenosyl-L-methionine + 5-hydroxyuridine(34) in tRNA = 5-carboxymethoxyuridine(34) in tRNA + S-adenosyl-L-homocysteine + H(+). Its function is as follows. Catalyzes carboxymethyl transfer from carboxy-S-adenosyl-L-methionine (Cx-SAM) to 5-hydroxyuridine (ho5U) to form 5-carboxymethoxyuridine (cmo5U) at position 34 in tRNAs. The chain is tRNA U34 carboxymethyltransferase from Shewanella loihica (strain ATCC BAA-1088 / PV-4).